An 86-amino-acid chain; its full sequence is Heat shock factor-binding protein (86 aa).

The stretch at 34–63 forms a coiled coil; that stretch reads MSDSIITKIDDMGGRINELEQSINDLRAEM. The interval 42–52 is required for interactions with heat shock factors (HSFs); it reads IDDMGGRINEL. The disordered stretch occupies residues 59–86; it reads LRAEMGVEGTPPPASKSGDEPKTPASSS.

This sequence belongs to the HSBP1 family. Homohexamer. Interacts with HSFA1A, HSFA1B and HSFA2. As to expression, mostly expressed in siliques and flowers, and, to a lower extent, in roots, stems and leaves.

It is found in the nucleus. It localises to the cytoplasm. Its subcellular location is the cytosol. Its function is as follows. Negative regulator of the heat shock (HS) response. Affects negatively HSFA1B DNA-binding capacity in vitro. Involved in acquired thermotolerance but not basal thermotolerance. Crucial for seed development, after fertilization and during embryogenesis. In Arabidopsis thaliana (Mouse-ear cress), this protein is Heat shock factor-binding protein.